Reading from the N-terminus, the 2799-residue chain is Peramine synthetase ppzA (2799 aa).

Positions 270–666 are adenylation 1; that stretch reads QERCRLQPNA…VGRKDTQVKI (397 aa). One can recognise a Carrier 1 domain in the interval 799–875; it reads QPLTGMERLL…DLSRQSRYIE (77 aa). Ser-836 is modified (O-(pantetheine 4'-phosphoryl)serine). The tract at residues 914–1327 is condensation; sequence DAYPCTPLQE…ITILTTEDLE (414 aa). The interval 1350–1743 is adenylation 2; the sequence is DKVQARPNAP…TLSFVRRKDT (394 aa). The tract at residues 1874 to 1970 is methylation (Met) domain; that stretch reads LEIGCGSGMM…EYLVKLIQDI (97 aa). One can recognise a Carrier 2 domain in the interval 2290 to 2368; sequence SPTTDMEKEL…RLLLDCCCDD (79 aa). Ser-2327 is subject to O-(pantetheine 4'-phosphoryl)serine. Residues 2420–2737 are thiesterase (TE) domain; it reads TVLLTGANGF…LADMLQDLED (318 aa).

The protein belongs to the NRP synthetase family. Pantetheine 4'-phosphate is required as a cofactor.

It carries out the reaction (S)-1-pyrroline-5-carboxylate + L-arginine + S-adenosyl-L-methionine + 2 ATP = peramine + 2 AMP + S-adenosyl-L-homocysteine + 2 diphosphate + H2O + 2 H(+). It participates in secondary metabolite biosynthesis. Functionally, nonribosomal peptide synthetase; part of the gene cluster that mediates the biosynthesis of pyrrolopyrazines, secondary metabolites showing insecticidal activity. The single multifunctional NRPS ppzA is responsible for the biosynthesis of peramine. The condensation domain of ppzA is proposed to catalyze formation of a peptide bond between 1-pyrroline-5-carboxylate and arginine. The methylation domain of ppzA would catalyze the N-methylation of the alpha-amino group of arginine. The reductase domain is proposed to be responsible for reduction of the thioester and the cyclization to form an iminium ion resulting in release from the peptide synthetase. Deprotonation of this intermediate and oxidation of the pyrroline ring would give rise to peramine. This final oxidation to give the pyrrole functionality may be spontaneous. In Epichloe species that produce only peramine, the peramine synthetase gene is not localized in a gene cluster, in contrast to Metarhizium species that contain additional pyrrolopyrazine biosynthesis genes. The 2-oxoglutarate-Fe(II) type oxidoreductase ppzC hydroxylates peramine to yield the newly identified compound 8-hydroxyperamine whereas ppzD converts L-proline into trans-4-hydroxy-L-proline, a precursor of peramine biosynthesis. This chain is Peramine synthetase ppzA, found in Metarhizium majus (strain ARSEF 297).